We begin with the raw amino-acid sequence, 145 residues long: Histone H2B.7 (145 aa).

Residues 1–30 (MAPKAEKKPAEKKPVEEKSKAEKAPAEKKP) show a composition bias toward basic and acidic residues. The interval 1 to 53 (MAPKAEKKPAEKKPVEEKSKAEKAPAEKKPKAGKKLPKEAGAGGDKKKKMKKK) is disordered. Ala-2 is modified (n,N,N-trimethylalanine; alternate). A N,N-dimethylalanine; alternate modification is found at Ala-2. The residue at position 2 (Ala-2) is an N-methylalanine; alternate. Lys-4 bears the N6-methyllysine; partial mark. Residues Lys-7 and Lys-12 each carry the N6-acetyllysine modification. An N6,N6-dimethyllysine modification is found at Lys-13. N6-acetyllysine occurs at positions 23, 28, and 34. Lys-35 bears the N6-acetyllysine; partial mark. Lys-141 participates in a covalent cross-link: Glycyl lysine isopeptide (Lys-Gly) (interchain with G-Cter in ubiquitin).

Belongs to the histone H2B family. The nucleosome is a histone octamer containing two molecules each of H2A, H2B, H3 and H4 assembled in one H3-H4 heterotetramer and two H2A-H2B heterodimers. The octamer wraps approximately 147 bp of DNA. In terms of processing, can be acetylated to form H2BK6ac, H2BK11ac, H2BK22ac, H2BK27ac H2BK33ac and H2BK34ac. Mono-, di- or trimethylated at the N-terminus to form H2BA1me1/2/3. H2BA1me2 and H2BA1me3 may be methylated and/or acetylated to form H2BA1me2K3me1, H2BA1me2K3me1K6ac, H2BA1me2K6ac H2BA1me3K6ac, H2BA1me3K6acK11ac and H2BA1me2K3me1K6acK11ac. Post-translationally, monoubiquitinated by BRE1 to form H2BK143ub1 and deubiquitinated by UBP26. Required for heterochromatic histone H3 di- and trimethylation at H3K4me. May give a specific tag for epigenetic transcriptional activation.

It is found in the nucleus. The protein resides in the chromosome. Its function is as follows. Core component of nucleosome. Nucleosomes wrap and compact DNA into chromatin, limiting DNA accessibility to the cellular machineries which require DNA as a template. Histones thereby play a central role in transcription regulation, DNA repair, DNA replication and chromosomal stability. DNA accessibility is regulated via a complex set of post-translational modifications of histones, also called histone code, and nucleosome remodeling. The sequence is that of Histone H2B.7 from Arabidopsis thaliana (Mouse-ear cress).